The sequence spans 294 residues: MQTFSSAAALTSILRRTTIYHGGFGTGLRIRRSFYFLSAIRQENPNVTKNPHPNKTILRSFLAPVLPLDEKPNLVELQAIGTIATALADYMRVIVQDVPESDNGEDDKIGVELLCVVRKLLKKIGRTVLVGDKVLVDKVDWVDRRAKIINVFDRVSEVLDPPVANVDHLVILFSLDQPKIDPFTLTRFLVEAESIGIRITVALNKCELVTQEEVESWKIRLRSWNYEPLFCSVGTKVGIDEIAFNLRNQTSVIVGPSGVGKSSLINILRSSYGGDIKHEEVFKPVSFFLSYFIL.

Residues 1 to 68 (MQTFSSAAAL…RSFLAPVLPL (68 aa)) constitute a mitochondrion transit peptide. One can recognise a CP-type G domain in the interval 155–294 (VSEVLDPPVA…VSFFLSYFIL (140 aa)). 255–263 (GPSGVGKSS) lines the GTP pocket.

Belongs to the TRAFAC class YlqF/YawG GTPase family.

It is found in the mitochondrion. The chain is Small ribosomal subunit biogenesis GTPase RsgA 2, mitochondrial from Arabidopsis thaliana (Mouse-ear cress).